The following is a 372-amino-acid chain: NAD(P)H-quinone oxidoreductase subunit 1 (372 aa).

8 helical membrane passes run 28–48 (IWLP…VLVV), 97–117 (WLFT…YLIV), 130–150 (VGIF…LMSG), 176–196 (LALA…IDIV), 204–224 (ILGW…IAAL), 265–285 (LVLS…FPIP), 308–328 (SLGI…AVLL), and 351–371 (VALV…IAFG).

Belongs to the complex I subunit 1 family. NDH-1 is composed of at least 11 different subunits.

It localises to the cellular thylakoid membrane. It carries out the reaction a plastoquinone + NADH + (n+1) H(+)(in) = a plastoquinol + NAD(+) + n H(+)(out). The enzyme catalyses a plastoquinone + NADPH + (n+1) H(+)(in) = a plastoquinol + NADP(+) + n H(+)(out). Its function is as follows. NDH-1 shuttles electrons from an unknown electron donor, via FMN and iron-sulfur (Fe-S) centers, to quinones in the respiratory and/or the photosynthetic chain. The immediate electron acceptor for the enzyme in this species is believed to be plastoquinone. Couples the redox reaction to proton translocation, and thus conserves the redox energy in a proton gradient. This Picosynechococcus sp. (strain ATCC 27264 / PCC 7002 / PR-6) (Agmenellum quadruplicatum) protein is NAD(P)H-quinone oxidoreductase subunit 1.